The sequence spans 477 residues: Membrane-bound lytic murein transglycosylase F (477 aa).

The first 22 residues, 1–22 (MTRFLLIIILGFLLTACQQVTV), serve as a signal peptide directing secretion. Positions 23–257 (DEPEFVPHQL…HLNEKYFGHV (235 aa)) are non-LT domain. An LT domain region spans residues 258–477 (KRFDYIDTRA…AGSLSPDQPK (220 aa)). Glu-302 is a catalytic residue. The disordered stretch occupies residues 446 to 477 (SKQPMPEDEQNDLIAEELPSMPAGSLSPDQPK). Acidic residues predominate over residues 451 to 460 (PEDEQNDLIA).

It in the N-terminal section; belongs to the bacterial solute-binding protein 3 family. This sequence in the C-terminal section; belongs to the transglycosylase Slt family.

Its subcellular location is the cell outer membrane. The catalysed reaction is Exolytic cleavage of the (1-&gt;4)-beta-glycosidic linkage between N-acetylmuramic acid (MurNAc) and N-acetylglucosamine (GlcNAc) residues in peptidoglycan, from either the reducing or the non-reducing ends of the peptidoglycan chains, with concomitant formation of a 1,6-anhydrobond in the MurNAc residue.. Its function is as follows. Murein-degrading enzyme that degrades murein glycan strands and insoluble, high-molecular weight murein sacculi, with the concomitant formation of a 1,6-anhydromuramoyl product. Lytic transglycosylases (LTs) play an integral role in the metabolism of the peptidoglycan (PG) sacculus. Their lytic action creates space within the PG sacculus to allow for its expansion as well as for the insertion of various structures such as secretion systems and flagella. The polypeptide is Membrane-bound lytic murein transglycosylase F (Shewanella sp. (strain W3-18-1)).